We begin with the raw amino-acid sequence, 162 residues long: Interleukin-15 (162 aa).

Positions 1 to 29 (MRILKPYLRSTSIQCYLCLLLNSHFLTEA) are cleaved as a signal peptide. Residues 30-48 (GIHVFILGCISASLPKTEA) constitute a propeptide that is removed on maturation. Cystine bridges form between C83/C133 and C90/C136. N-linked (GlcNAc...) asparagine glycosylation is found at N104, N113, N121, and N127.

This sequence belongs to the IL-15/IL-21 family.

It is found in the secreted. Functionally, cytokine that plays a major role in the development of inflammatory and protective immune responses to microbial invaders and parasites by modulating immune cells of both the innate and adaptive immune systems. Stimulates the proliferation of natural killer cells, T-cells and B-cells and promotes the secretion of several cytokines. In monocytes, induces the production of IL8 and monocyte chemotactic protein 1/CCL2, two chemokines that attract neutrophils and monocytes respectively to sites of infection. Unlike most cytokines, which are secreted in soluble form, IL15 is expressed in association with its high affinity IL15RA on the surface of IL15-producing cells and delivers signals to target cells that express IL2RB and IL2RG receptor subunits. Binding to its receptor triggers the phosphorylation of JAK1 and JAK3 and the recruitment and subsequent phosphorylation of signal transducer and activator of transcription-3/STAT3 and STAT5. In mast cells, induces the rapid tyrosine phosphorylation of STAT6 and thereby controls mast cell survival and release of cytokines such as IL4. This is Interleukin-15 (IL15) from Bos taurus (Bovine).